The following is a 380-amino-acid chain: DNA-directed RNA polymerase subunit Rpo1C (380 aa).

The protein belongs to the RNA polymerase beta' chain family. As to quaternary structure, part of the RNA polymerase complex.

Its subcellular location is the cytoplasm. It carries out the reaction RNA(n) + a ribonucleoside 5'-triphosphate = RNA(n+1) + diphosphate. Functionally, DNA-dependent RNA polymerase (RNAP) catalyzes the transcription of DNA into RNA using the four ribonucleoside triphosphates as substrates. Forms part of the jaw domain. In Archaeoglobus fulgidus (strain ATCC 49558 / DSM 4304 / JCM 9628 / NBRC 100126 / VC-16), this protein is DNA-directed RNA polymerase subunit Rpo1C.